The primary structure comprises 267 residues: uncharacterized protein (267 aa).

The 197-residue stretch at 2–198 folds into the ABC transporter domain; it reads LGANGAGKTT…FRNKFIVIEG (197 aa). An ATP-binding site is contributed by 3–10; that stretch reads GANGAGKT.

Belongs to the ABC transporter superfamily.

This is an uncharacterized protein from Alkalihalophilus pseudofirmus (strain ATCC BAA-2126 / JCM 17055 / OF4) (Bacillus pseudofirmus).